A 704-amino-acid chain; its full sequence is Elongation factor G (704 aa).

One can recognise a tr-type G domain in the interval 8–291 (DKVRNIGIMA…TVVECLPSPV (284 aa)). GTP-binding positions include 17–24 (AHIDAGKT), 90–94 (DTPGH), and 144–147 (NKMD).

This sequence belongs to the TRAFAC class translation factor GTPase superfamily. Classic translation factor GTPase family. EF-G/EF-2 subfamily.

The protein localises to the cytoplasm. Functionally, catalyzes the GTP-dependent ribosomal translocation step during translation elongation. During this step, the ribosome changes from the pre-translocational (PRE) to the post-translocational (POST) state as the newly formed A-site-bound peptidyl-tRNA and P-site-bound deacylated tRNA move to the P and E sites, respectively. Catalyzes the coordinated movement of the two tRNA molecules, the mRNA and conformational changes in the ribosome. The chain is Elongation factor G from Prosthecochloris aestuarii (strain DSM 271 / SK 413).